A 20-amino-acid polypeptide reads, in one-letter code: Dentinal fluid transport-stimulating peptide (20 aa).

The tract at residues 1-20 is disordered; the sequence is GVIAWELQHNEPGRKDSTAG. Residues 8–20 show a composition bias toward basic and acidic residues; it reads QHNEPGRKDSTAG.

This peptide stimulates the transport of dentinal fluid, which is important for the prevention of dental caries. The sequence is that of Dentinal fluid transport-stimulating peptide from Rattus norvegicus (Rat).